Reading from the N-terminus, the 938-residue chain is Auxilin (938 aa).

The interval 19-41 is disordered; it reads AAAGENRMKDSENKGASSPDMEP. 3 consecutive repeat copies span residues 61–64, 65–68, and 69–72. Residues 61-72 form a 3 X 4 AA approximate tandem repeats region; sequence NLKDNLKDTLKD. The 168-residue stretch at 80–247 folds into the Phosphatase tensin-type domain; it reads SVSSYTKGDL…GYMCDLLADK (168 aa). Serine 137 carries the post-translational modification Phosphoserine. Cysteine 189 functions as the Phosphocysteine intermediate in the catalytic mechanism. The region spanning 253-391 is the C2 tensin-type domain; sequence FKPLTIKAIT…FQVTLDIEVQ (139 aa). The SH3-binding motif lies at 434 to 442; sequence PADLPPDHP. Residues 467-801 are disordered; it reads EEDHAALVNQ…GKGSTNLEGK (335 aa). A phosphoserine mark is found at serine 478 and serine 481. The span at 531-548 shows a compositional bias: polar residues; that stretch reads DVSTNFSSLAAPPSNSEL. A compositionally biased stretch (low complexity) spans 559 to 569; it reads TGPAQAGQAGV. 2 stretches are compositionally biased toward polar residues: residues 579–596 and 624–654; these read VSAQSTPRRTATSASASP and FLNTSSASSDPFLQPTRSPSPTVHASSTPAV. Serine 595 carries the phosphoserine modification. Residues 679 to 694 show a composition bias toward low complexity; it reads SAATSPTGSSHGTPTH. Over residues 754 to 781 the composition is skewed to polar residues; the sequence is NWQQTQSKPQSSMPHSSPQNRPNYNVSF. The J domain occupies 874 to 938; that stretch reads TKWKPVGMAD…FENQGQKPLY (65 aa).

Forms a complex composed of HSPA8, CLTC and DNAJC6. Interacts with HSPA8/HSC70 in an ATP-dependent manner; this interaction stimulates the HSPA8's ATPase activity. Interacts with CLTC; this interaction produces a local change in heavy-chain contacts, creating a detectable global distortion of the clathrin coat. Interacts with AP2A2. Interacts with DNM1(GTP-bound form); this interaction allows clathrin-coated vesicle (CCV) formation at the plasma membrane. The N-terminus is blocked. Post-translationally, phosphorylation at Ser-595 modulates its ability to bind CLTC and therefore the synaptic vesicle endocytosis (SVE).

It localises to the cytoplasmic vesicle. Its subcellular location is the clathrin-coated vesicle. Its function is as follows. May act as a protein phosphatase and/or a lipid phosphatase. Co-chaperone that recruits HSPA8/HSC70 to clathrin-coated vesicles (CCVs) and promotes the ATP-dependent dissociation of clathrin from CCVs and participates in clathrin-mediated endocytosis of synaptic vesicles and their recycling and also in intracellular trafficking. Firstly, binds tightly to the clathrin cages, at a ratio of one DNAJC6 per clathrin triskelion. The HSPA8:ATP complex then binds to the clathrin-auxilin cage, initially at a ratio of one HSPA8 per triskelion leading to ATP hydrolysis stimulation and causing a conformational change in the HSPA8. This cycle is repeated three times to drive to a complex containing the clathrin-auxilin cage associated to three HSPA8:ADP complex. The ATP hydrolysis of the third HSPA8:ATP complex leads to a concerted dismantling of the cage into component triskelia. Then, dissociates from the released triskelia and be recycled to initiate another cycle of HSPA8's recruitment. Also acts during the early steps of clathrin-coated vesicle (CCV) formation through its interaction with the GTP bound form of DNM1. The chain is Auxilin from Mus musculus (Mouse).